A 325-amino-acid chain; its full sequence is Protein ORANGE-GREEN, chloroplastic (325 aa).

The N-terminal 54 residues, 1 to 54 (MDRVLVASYPINHLIRPHSFRIDYCWSTCFTSRLNSGKERQKLSSRWRWRSMAS), are a transit peptide targeting the chloroplast. Positions 53 to 71 (ASDSTDSSSSSSFAPSVES) are enriched in low complexity. A disordered region spans residues 53 to 77 (ASDSTDSSSSSSFAPSVESDPSDKT). 2 helical membrane passes run 164–184 (LYYVTCYSLIAGIILFGGLLA) and 217–237 (IVASFSGGAVGVISALMVVEV). The segment at 226-317 (VGVISALMVV…CTGMAMASEH (92 aa)) is CR-type-like. A CXXCXGXG motif repeat occupies 248 to 255 (CKYCLGTG). Residues 259–266 (CARCSNTG) form a CXXCXXXG motif repeat. A CXXCXGXG motif repeat occupies 292 to 299 (CQNCSGSG). A CXXCXXXG motif repeat occupies 303-310 (CPTCLCTG).

The protein belongs to the orange-like family.

It localises to the plastid. The protein resides in the chloroplast membrane. Functionally, involved in chloroplast differentiation in fruit flesh. In Cucumis melo (Muskmelon), this protein is Protein ORANGE-GREEN, chloroplastic.